The primary structure comprises 555 residues: Wee1-like protein kinase 2-A (555 aa).

2 disordered regions span residues 1-81 (MRTA…SVGA) and 149-175 (FTPE…DCRT). Over residues 38 to 48 (SPVSSWRTNNC) the composition is skewed to polar residues. Residues 68 to 78 (SPSSDYSPDPS) show a composition bias toward low complexity. Residues 149 to 160 (FTPESYRQTHFQ) are compositionally biased toward polar residues. The Protein kinase domain maps to 210–480 (FLEIEKIGAG…AASLAKNSVL (271 aa)). ATP-binding positions include 216–224 (IGAGEFGSV) and lysine 239. Catalysis depends on aspartate 337, which acts as the Proton acceptor. Asparagine 342 and aspartate 374 together coordinate Mg(2+). The stretch at 487–513 (AAQLQKQLNVEKFKTAMLERELKAAKL) forms a coiled coil. Serine 549 bears the Phosphoserine mark.

The protein belongs to the protein kinase superfamily. Ser/Thr protein kinase family. WEE1 subfamily. As to quaternary structure, interacts with prmt5; this promotes protesomal degradation of wee2-a in the nucleus. The interaction with prmt5 is disrupted upon activation of the DNA replication checkpoint. Post-translationally, subject to proteasomal degradation in the nucleus. In terms of tissue distribution, detected in egg (at protein level). Oocyte-specific maternally supplied protein. Present in immature and mature oocytes and in early (pregastrula) embryos, but not in post-gastrula embryos.

Its subcellular location is the nucleus. The protein localises to the cytoplasm. The protein resides in the cytosol. It catalyses the reaction L-tyrosyl-[protein] + ATP = O-phospho-L-tyrosyl-[protein] + ADP + H(+). Oocyte-specific protein tyrosine kinase that phosphorylates and inhibits cdk1 and acts as a key regulator of meiosis. Required to maintain meiotic arrest in oocytes by phosphorylating cdk1 at 'Tyr-15', which inhibits cdk1 activity and prevents meiotic reentry. Negative regulator of mitosis. Involved in the mitotic DNA replication checkpoint. In Xenopus laevis (African clawed frog), this protein is Wee1-like protein kinase 2-A (wee2-a).